Here is a 133-residue protein sequence, read N- to C-terminus: Ribosome-binding factor A (133 aa).

This sequence belongs to the RbfA family. As to quaternary structure, monomer. Binds 30S ribosomal subunits, but not 50S ribosomal subunits or 70S ribosomes.

The protein localises to the cytoplasm. Its function is as follows. One of several proteins that assist in the late maturation steps of the functional core of the 30S ribosomal subunit. Associates with free 30S ribosomal subunits (but not with 30S subunits that are part of 70S ribosomes or polysomes). Required for efficient processing of 16S rRNA. May interact with the 5'-terminal helix region of 16S rRNA. The polypeptide is Ribosome-binding factor A (Citrobacter koseri (strain ATCC BAA-895 / CDC 4225-83 / SGSC4696)).